The chain runs to 494 residues: Ketol-acid reductoisomerase (NADP(+)) (494 aa).

Residues 14–208 form the KARI N-terminal Rossmann domain; the sequence is LDQLGRCRFM…GGHRAGCLES (195 aa). NADP(+)-binding positions include 45 to 48, R68, R76, S78, and 108 to 110; these read CGAQ and DKQ. The active site involves H132. G158 is a binding site for NADP(+). 2 KARI C-terminal knotted domains span residues 209–344 and 345–487; these read SFVA…NYPE and SDVE…MSDM. 4 residues coordinate Mg(2+): D217, E221, E389, and E393. S414 is a substrate binding site.

It belongs to the ketol-acid reductoisomerase family. It depends on Mg(2+) as a cofactor.

It carries out the reaction (2R)-2,3-dihydroxy-3-methylbutanoate + NADP(+) = (2S)-2-acetolactate + NADPH + H(+). It catalyses the reaction (2R,3R)-2,3-dihydroxy-3-methylpentanoate + NADP(+) = (S)-2-ethyl-2-hydroxy-3-oxobutanoate + NADPH + H(+). It participates in amino-acid biosynthesis; L-isoleucine biosynthesis; L-isoleucine from 2-oxobutanoate: step 2/4. It functions in the pathway amino-acid biosynthesis; L-valine biosynthesis; L-valine from pyruvate: step 2/4. Involved in the biosynthesis of branched-chain amino acids (BCAA). Catalyzes an alkyl-migration followed by a ketol-acid reduction of (S)-2-acetolactate (S2AL) to yield (R)-2,3-dihydroxy-isovalerate. In the isomerase reaction, S2AL is rearranged via a Mg-dependent methyl migration to produce 3-hydroxy-3-methyl-2-ketobutyrate (HMKB). In the reductase reaction, this 2-ketoacid undergoes a metal-dependent reduction by NADPH to yield (R)-2,3-dihydroxy-isovalerate. This is Ketol-acid reductoisomerase (NADP(+)) from Aliivibrio fischeri (strain ATCC 700601 / ES114) (Vibrio fischeri).